A 124-amino-acid chain; its full sequence is Aspartate 1-decarboxylase (124 aa).

The active-site Schiff-base intermediate with substrate; via pyruvic acid is Ser-25. Ser-25 is subject to Pyruvic acid (Ser). Thr-57 contributes to the substrate binding site. The active-site Proton donor is Tyr-58. 73-75 (GAA) is a binding site for substrate.

Belongs to the PanD family. As to quaternary structure, heterooctamer of four alpha and four beta subunits. Pyruvate serves as cofactor. In terms of processing, is synthesized initially as an inactive proenzyme, which is activated by self-cleavage at a specific serine bond to produce a beta-subunit with a hydroxyl group at its C-terminus and an alpha-subunit with a pyruvoyl group at its N-terminus.

Its subcellular location is the cytoplasm. It carries out the reaction L-aspartate + H(+) = beta-alanine + CO2. The protein operates within cofactor biosynthesis; (R)-pantothenate biosynthesis; beta-alanine from L-aspartate: step 1/1. Catalyzes the pyruvoyl-dependent decarboxylation of aspartate to produce beta-alanine. The chain is Aspartate 1-decarboxylase from Clostridium botulinum (strain Alaska E43 / Type E3).